We begin with the raw amino-acid sequence, 432 residues long: Solute carrier family 35 member F5 (432 aa).

An N-terminal signal peptide occupies residues 1–33; sequence MFLPSTTNHSSAPLQKHLCLFCTFWALLFGSHG. Ser-116 bears the Phosphoserine mark. 8 helical membrane passes run 152–172, 177–197, 205–225, 236–256, 270–290, 304–324, 329–349, and 361–381; these read ISFFFCFVWFLANLSYQEALS, AIVNILSSTSGLFTLILAAVF, FTLSKLLAVILSIGGVVLVNL, TIGSIWSLAGAMLYAVYIVMI, MFFGFVGLFNLLLLWPGFFLL, VVLMCIIINGLIGTVLSEFLW, FLTSSLIGTLALSLTIPLSII, and WLFFAGAIPVFFSFFIVTLLC. The EamA domain occupies 161–225; it reads FLANLSYQEA…SIGGVVLVNL (65 aa).

It belongs to the SLC35F solute transporter family.

Its subcellular location is the membrane. Putative solute transporter. In Macaca fascicularis (Crab-eating macaque), this protein is Solute carrier family 35 member F5 (SLC35F5).